Here is a 248-residue protein sequence, read N- to C-terminus: 2,3-bisphosphoglycerate-dependent phosphoglycerate mutase (248 aa).

Substrate-binding positions include 8-15, 21-22, arginine 60, 87-90, lysine 98, 114-115, and 183-184; these read RHGESEWN, TG, ERHY, RR, and GN. Histidine 9 functions as the Tele-phosphohistidine intermediate in the catalytic mechanism. Glutamate 87 acts as the Proton donor/acceptor in catalysis.

This sequence belongs to the phosphoglycerate mutase family. BPG-dependent PGAM subfamily.

It carries out the reaction (2R)-2-phosphoglycerate = (2R)-3-phosphoglycerate. The protein operates within carbohydrate degradation; glycolysis; pyruvate from D-glyceraldehyde 3-phosphate: step 3/5. Functionally, catalyzes the interconversion of 2-phosphoglycerate and 3-phosphoglycerate. The chain is 2,3-bisphosphoglycerate-dependent phosphoglycerate mutase from Coprothermobacter proteolyticus (strain ATCC 35245 / DSM 5265 / OCM 4 / BT).